Here is a 487-residue protein sequence, read N- to C-terminus: Betaine aldehyde dehydrogenase 1 (487 aa).

K(+) is bound by residues serine 26, isoleucine 27, and aspartate 93. Residue 150 to 152 (GAW) participates in NAD(+) binding. Lysine 162 acts as the Charge relay system in catalysis. NAD(+) is bound by residues 176 to 179 (KPSE) and 229 to 232 (SVPT). K(+) is bound at residue leucine 244. Glutamate 250 functions as the Proton acceptor in the catalytic mechanism. NAD(+) contacts are provided by glycine 252, cysteine 284, and glutamate 384. Residue cysteine 284 is the Nucleophile of the active site. Cysteine 284 is subject to Cysteine sulfenic acid (-SOH). The K(+) site is built by lysine 454 and glycine 457. Glutamate 461 (charge relay system) is an active-site residue.

This sequence belongs to the aldehyde dehydrogenase family. As to quaternary structure, dimer of dimers. It depends on K(+) as a cofactor.

It catalyses the reaction betaine aldehyde + NAD(+) + H2O = glycine betaine + NADH + 2 H(+). It functions in the pathway amine and polyamine biosynthesis; betaine biosynthesis via choline pathway; betaine from betaine aldehyde: step 1/1. In terms of biological role, involved in the biosynthesis of the osmoprotectant glycine betaine. Catalyzes the irreversible oxidation of betaine aldehyde to the corresponding acid. The protein is Betaine aldehyde dehydrogenase 1 of Rhizobium meliloti (strain 1021) (Ensifer meliloti).